An 86-amino-acid chain; its full sequence is ATP synthase subunit c (86 aa).

Transmembrane regions (helical) follow at residues 4–24 (AIVAAASAIGAGIAVATGIGA) and 57–77 (VAIAESSAIYGLVISIILLFV).

This sequence belongs to the ATPase C chain family. In terms of assembly, F-type ATPases have 2 components, F(1) - the catalytic core - and F(0) - the membrane proton channel. F(1) has five subunits: alpha(3), beta(3), gamma(1), delta(1), epsilon(1). F(0) has three main subunits: a(1), b(2) and c(10-14). The alpha and beta chains form an alternating ring which encloses part of the gamma chain. F(1) is attached to F(0) by a central stalk formed by the gamma and epsilon chains, while a peripheral stalk is formed by the delta and b chains.

The protein resides in the cell membrane. F(1)F(0) ATP synthase produces ATP from ADP in the presence of a proton or sodium gradient. F-type ATPases consist of two structural domains, F(1) containing the extramembraneous catalytic core and F(0) containing the membrane proton channel, linked together by a central stalk and a peripheral stalk. During catalysis, ATP synthesis in the catalytic domain of F(1) is coupled via a rotary mechanism of the central stalk subunits to proton translocation. Functionally, key component of the F(0) channel; it plays a direct role in translocation across the membrane. A homomeric c-ring of between 10-14 subunits forms the central stalk rotor element with the F(1) delta and epsilon subunits. In Clostridioides difficile (strain 630) (Peptoclostridium difficile), this protein is ATP synthase subunit c.